The primary structure comprises 177 residues: Inner membrane protein p22 (177 aa).

At 1-7 (MFNIKMT) the chain is on the intravirion side. The helical transmembrane segment at 8 to 28 (ISTLLIALIILVIIILVVFLY) threads the bilayer. Topologically, residues 29-177 (YKKQQPPKKV…IALPRNHKHA (149 aa)) are virion surface.

It belongs to the asfivirus inner membrane protein p22 family.

The protein localises to the virion membrane. It localises to the host cell membrane. This is Inner membrane protein p22 from Ornithodoros (relapsing fever ticks).